The chain runs to 227 residues: Fibrillarin-like rRNA/tRNA 2'-O-methyltransferase (227 aa).

Residues 82–83, 100–101, 125–126, and 145–148 contribute to the S-adenosyl-L-methionine site; these read TT, EF, DA, and DVAQ.

The protein belongs to the methyltransferase superfamily. Fibrillarin family. As to quaternary structure, interacts with nop5. Component of box C/D small ribonucleoprotein (sRNP) particles that contain rpl7ae, FlpA and nop5, plus a guide RNA.

In terms of biological role, involved in pre-rRNA and tRNA processing. Utilizes the methyl donor S-adenosyl-L-methionine to catalyze the site-specific 2'-hydroxyl methylation of ribose moieties in rRNA and tRNA. Site specificity is provided by a guide RNA that base pairs with the substrate. Methylation occurs at a characteristic distance from the sequence involved in base pairing with the guide RNA. This chain is Fibrillarin-like rRNA/tRNA 2'-O-methyltransferase, found in Methanosarcina mazei (strain ATCC BAA-159 / DSM 3647 / Goe1 / Go1 / JCM 11833 / OCM 88) (Methanosarcina frisia).